Reading from the N-terminus, the 189-residue chain is MSQIIDQVQAALQNIDKELEKYPALKELEKQIPVPKSYILLGFVGFYFILIFLNIGGIGQLLSNIAGLVIPGYYSLLALETPGKADDTQYLTYWVVFATLNVFEFWSKAILYWVPFYYLFKTAFLLYIGLPQYGGAELVYKAIVKPLAQKLVNIQPHGGPSDSLKAQAQSAVDAAESHVPQGHSTGVSH.

At 1 to 35 the chain is on the cytoplasmic side; the sequence is MSQIIDQVQAALQNIDKELEKYPALKELEKQIPVP. A helical transmembrane segment spans residues 36–55; sequence KSYILLGFVGFYFILIFLNI. The Lumenal portion of the chain corresponds to 56–57; the sequence is GG. Residues 58-78 form a helical membrane-spanning segment; that stretch reads IGQLLSNIAGLVIPGYYSLLA. At 79–88 the chain is on the cytoplasmic side; it reads LETPGKADDT. Residues 89-105 traverse the membrane as a helical segment; it reads QYLTYWVVFATLNVFEF. Over 106 to 108 the chain is Lumenal; it reads WSK. Residues 109 to 127 form a helical membrane-spanning segment; it reads AILYWVPFYYLFKTAFLLY. Over 128 to 189 the chain is Cytoplasmic; sequence IGLPQYGGAE…PQGHSTGVSH (62 aa).

It belongs to the DP1 family. As to quaternary structure, oligomer.

The protein resides in the endoplasmic reticulum membrane. Its subcellular location is the golgi apparatus membrane. Functionally, required to generate and maintain the structure of the tubular endoplasmic reticulum network and the vacuole. Induces high curvature in membranes and causes membrane tubule formation. Involved in membrane/vesicle trafficking. The polypeptide is Protein YOP1 (YOP1) (Yarrowia lipolytica (strain CLIB 122 / E 150) (Yeast)).